A 597-amino-acid chain; its full sequence is Golgin subfamily A member 8C (597 aa).

2 disordered regions span residues 1 to 80 (MAEE…VPDS) and 96 to 120 (KQQK…QKAE). Polar residues predominate over residues 38 to 50 (TNGSIHETATSGG). Low complexity predominate over residues 53 to 70 (SPGDSSSTSSSLHAPQSP). 3 coiled-coil regions span residues 81–141 (RSVK…NTDL), 199–255 (EWKL…SQEV), and 296–394 (SEVE…GKRL). A compositionally biased stretch (basic and acidic residues) spans 100-120 (KQVEHQLEEEKKANNEKQKAE). Disordered regions lie at residues 390–422 (LGKR…SGFM), 457–498 (PITK…GVAA), and 549–576 (PVQG…QEHP). The span at 470-483 (PGGGHHQAGPGQGG) shows a compositional bias: gly residues. A compositionally biased stretch (basic and acidic residues) spans 553–563 (ETREGSPHDKP).

It belongs to the GOLGA8 family.

The sequence is that of Golgin subfamily A member 8C (GOLGA8CP) from Homo sapiens (Human).